The primary structure comprises 316 residues: MTGQGQSAAGSAAWSAVFRHVRYENLVAGVSGGVLSNLALHPLDLVKIRFAVSDGLEVRPKYKGILHCLATIWKVDGLRGLYQGVTPNVWGAGLSWGLYFFFYNAIKSYKTEGRAEQLEPLEYLVSAAEAGAMTLCITNPLWVTKTRLMLQYGGVASPSQRQYKGMFDALVKIYKYEGVRGLYKGFVPGLFGTSHGALQFMAYELLKLKYNKHINRLPEAQLSTAEYISVAALSKIFAVAATYPYQVVRARLQDQHVSYGGVTDVITKTWRKEGIGGFYKGIAPNLIRVTPACCITFVVYENVSHFLYDLREKKVS.

Solcar repeat units follow at residues H20–Y109, L118–K209, and L222–F306. Transmembrane regions (helical) follow at residues L26–V46, V89–I106, Y123–V143, G185–Y203, Y227–Y243, and G281–Y300.

This sequence belongs to the mitochondrial carrier (TC 2.A.29) family.

It is found in the mitochondrion inner membrane. It carries out the reaction FAD(in) = FAD(out). In terms of biological role, facilitates flavin adenine dinucleotide (FAD) translocation across the mitochondrial inner membrane into the mitochondrial matrix where it acts as a redox cofactor to assist flavoenzyme activities in fundamental metabolic processes including fatty acid beta-oxidation, amino acid and choline metabolism as well as mitochondrial electron transportation. In particular, provides FAD to DLD dehydrogenase of the glycine cleavage system, part of mitochondrial one-carbon metabolic pathway involved in neural tube closure in early embryogenesis. This chain is Solute carrier family 25 member 32, found in Mus musculus (Mouse).